The sequence spans 318 residues: Coproporphyrin III ferrochelatase (318 aa).

Positions 186 and 268 each coordinate Fe(2+).

This sequence belongs to the ferrochelatase family.

Its subcellular location is the cytoplasm. It carries out the reaction Fe-coproporphyrin III + 2 H(+) = coproporphyrin III + Fe(2+). Its pathway is porphyrin-containing compound metabolism; protoheme biosynthesis. In terms of biological role, involved in coproporphyrin-dependent heme b biosynthesis. Catalyzes the insertion of ferrous iron into coproporphyrin III to form Fe-coproporphyrin III. The chain is Coproporphyrin III ferrochelatase from Lactococcus lactis subsp. cremoris (strain MG1363).